A 127-amino-acid polypeptide reads, in one-letter code: Fluoride-specific ion channel FluC (127 aa).

Helical transmembrane passes span 4–24 (WFWIGLGGAAGTLARYGLSTW) and 36–56 (GTLAVNVIGSFLLGAIGEIAA). Na(+)-binding residues include G75 and T78. The chain crosses the membrane as a helical span at residues 100–120 (LANIAITLVVCLLAGVLGMVV).

Belongs to the fluoride channel Fluc/FEX (TC 1.A.43) family.

The protein resides in the cell inner membrane. It carries out the reaction fluoride(in) = fluoride(out). With respect to regulation, na(+) is not transported, but it plays an essential structural role and its presence is essential for fluoride channel function. Functionally, fluoride-specific ion channel. Important for reducing fluoride concentration in the cell, thus reducing its toxicity. In Sorangium cellulosum (strain So ce56) (Polyangium cellulosum (strain So ce56)), this protein is Fluoride-specific ion channel FluC.